Reading from the N-terminus, the 112-residue chain is Small ribosomal subunit protein bS6 (112 aa).

The protein belongs to the bacterial ribosomal protein bS6 family.

Its function is as follows. Binds together with bS18 to 16S ribosomal RNA. This chain is Small ribosomal subunit protein bS6, found in Chlamydia abortus (strain DSM 27085 / S26/3) (Chlamydophila abortus).